Reading from the N-terminus, the 258-residue chain is UPF0246 protein YaaA (258 aa).

The protein belongs to the UPF0246 family.

In Escherichia coli (strain SMS-3-5 / SECEC), this protein is UPF0246 protein YaaA.